Reading from the N-terminus, the 121-residue chain is Putative membrane protein insertion efficiency factor (121 aa).

The protein belongs to the UPF0161 family.

The protein localises to the cell inner membrane. Functionally, could be involved in insertion of integral membrane proteins into the membrane. This Rhodopseudomonas palustris (strain HaA2) protein is Putative membrane protein insertion efficiency factor.